Consider the following 556-residue polypeptide: Polypeptide N-acetylgalactosaminyltransferase 13 (556 aa).

Residues 1–4 lie on the Cytoplasmic side of the membrane; the sequence is MRRF. Residues 5 to 27 traverse the membrane as a helical; Signal-anchor for type II membrane protein segment; it reads VYCKVVLATSLMWVLVDVFLLLY. The Lumenal segment spans residues 28–556; it reads FSECNKCDDK…WLLRNMTLGT (529 aa). N-linked (GlcNAc...) asparagine glycans are attached at residues Asn94 and Asn116. 5 disulfides stabilise this stretch: Cys105–Cys338, Cys329–Cys407, Cys441–Cys458, Cys481–Cys496, and Cys522–Cys539. The catalytic subdomain A stretch occupies residues 114–224; that stretch reads LPNTSVVIVF…LGWLEPLLAR (111 aa). Positions 155 and 185 each coordinate substrate. Positions 208 and 210 each coordinate Mn(2+). The tract at residues 284–346 is catalytic subdomain B; sequence PVRTPTMAGG…TCSHVGHVFR (63 aa). Trp315 contacts substrate. Position 343 (His343) interacts with Mn(2+). Substrate is bound by residues Arg346 and Tyr351. The Ricin B-type lectin domain occupies 428–550; sequence YSLGEIRNVE…GSRSQQWLLR (123 aa). N-linked (GlcNAc...) asparagine glycosylation occurs at Asn551.

It belongs to the glycosyltransferase 2 family. GalNAc-T subfamily. Mn(2+) is required as a cofactor. Specifically expressed in neuronal cells. Not expressed in glial cells such as astrocytes. Expressed at low level.

It is found in the golgi apparatus membrane. It catalyses the reaction L-seryl-[protein] + UDP-N-acetyl-alpha-D-galactosamine = a 3-O-[N-acetyl-alpha-D-galactosaminyl]-L-seryl-[protein] + UDP + H(+). The catalysed reaction is L-threonyl-[protein] + UDP-N-acetyl-alpha-D-galactosamine = a 3-O-[N-acetyl-alpha-D-galactosaminyl]-L-threonyl-[protein] + UDP + H(+). It participates in protein modification; protein glycosylation. Functionally, catalyzes the initial reaction in O-linked oligosaccharide biosynthesis, the transfer of an N-acetyl-D-galactosamine (GalNAc) residue from UDP-GalNAc to a serine or threonine residue on the protein receptor. Generates GalNAc-O-Ser/Thr structure also known as Tn antigen, which itself is immunogenic but also serves as a precursor for the synthesis of different mucin-type O-glycan core structures. Contributes to the synthesis of O-linked glycans on mucins and proteoglycans of the central nervous system. Can glycosylate both unmodified peptides and glycopeptides that already contain an O-linked GalNAc sugar. Transfers GalNAc to Thr-/Ser-rich tandem repeats GTTPSPVPTTSTTSAP of MUC5AC. Transfers GalNAc to three consecutive serine/threonine residues on SDC3 forming a triplet-Tn epitope expressed in Purkinje cells of the developing brain. May promote neurogenesis through glycosylation and stabilization of PDPN. The sequence is that of Polypeptide N-acetylgalactosaminyltransferase 13 (Galnt13) from Mus musculus (Mouse).